Reading from the N-terminus, the 230-residue chain is Nicotinamide riboside kinase 2 (230 aa).

An ATP-binding site is contributed by 9-17; that stretch reads GMTNGGKTT. Mg(2+)-binding residues include T16 and D35. D35 functions as the Proton acceptor in the catalytic mechanism. Residues 35-38 and 54-55 contribute to the substrate site; these read DDFF and WD. ATP is bound at residue R130. Residues R131 and 136–137 each bind substrate; that span reads YT. ATP-binding positions include 134-136 and 174-176; these read RNY and KSR. Residues 191 to 230 are disordered; it reads LLNRSQESAPSPARPARTQGPGRGCGHRTARPAASQQDSM.

Belongs to the uridine kinase family. NRK subfamily. Monomer. Interacts with ITGB1 alone or when associated with alpha-7, but not with alpha-5. As to expression, predominantly expressed in skeletal muscle and, at a much lower level, in the heart (at protein level). No expression in brain, kidney, liver, lung, pancreas nor placenta.

It carries out the reaction beta-nicotinamide D-riboside + ATP = beta-nicotinamide D-ribonucleotide + ADP + H(+). It catalyses the reaction beta-D-ribosylnicotinate + ATP = nicotinate beta-D-ribonucleotide + ADP + H(+). The protein operates within cofactor biosynthesis; NAD(+) biosynthesis. Functionally, catalyzes the phosphorylation of nicotinamide riboside (NR) and nicotinic acid riboside (NaR) to form nicotinamide mononucleotide (NMN) and nicotinic acid mononucleotide (NaMN). Reduces laminin matrix deposition and cell adhesion to laminin, but not to fibronectin. Involved in the regulation of PXN at the protein level and of PXN tyrosine phosphorylation. May play a role in the regulation of terminal myogenesis. This Homo sapiens (Human) protein is Nicotinamide riboside kinase 2 (NMRK2).